A 206-amino-acid polypeptide reads, in one-letter code: Smr domain-containing protein C11H11.03c (206 aa).

The Smr domain maps to 75-150 (IDLHGLYIDE…NEGRIYVYLP (76 aa)).

It localises to the cytoplasm. The protein localises to the nucleus. This chain is Smr domain-containing protein C11H11.03c, found in Schizosaccharomyces pombe (strain 972 / ATCC 24843) (Fission yeast).